Here is a 367-residue protein sequence, read N- to C-terminus: C-glycoside deglycosidase alpha subunit (367 aa).

Residue Glu146 coordinates Mg(2+). The active-site Proton acceptor is His148. Positions 178, 276, and 312 each coordinate Mg(2+).

This sequence belongs to the C-glycoside deglycosidase alpha subunit family. In terms of assembly, heterodimer composed of an alpha subunit (CarB1) and a beta subunit (CarC1). Requires Mg(2+) as cofactor.

It carries out the reaction 3''-dehydroisovitexin = 1,5-anhydro-D-erythro-hex-1-en-3-ulose + apigenin. With respect to regulation, activity is strongly reduced in the presence of chelating agents. Functionally, carbon-carbon bond-cleaving enzyme which participates in the metabolism of C-glycosides. Acts on the C6-glycosylated compound 3''-dehydroisovitexin (3''-oxo-isovitexin). Shows weak activity with 3''-dehydroisoorientin (3''-oxo-homoorientin) and 3'-dehydromangiferin (3'-oxo-mangiferin). This Arthrobacter globiformis (strain ATCC 8010 / DSM 20124 / JCM 1332 / NBRC 12137 / NCIMB 8907 / NRRL B-2979 / 168) protein is C-glycoside deglycosidase alpha subunit.